A 132-amino-acid chain; its full sequence is MSTDRSQVFGVARIFASFNDTFVHVTDLSGKETIARVTGGMKVKADRDESSPYAAMLAAQDVAAKCKEVGITAVHIKLRATGGTKTKTPGPGGQSALRALARSGLRIGRIEDVTPVPSDSTRRKGGRRGRRL.

The tract at residues Ile-110–Leu-132 is disordered. The span at Arg-123 to Leu-132 shows a compositional bias: basic residues.

The protein belongs to the universal ribosomal protein uS11 family. As to quaternary structure, component of the small ribosomal subunit. Mature ribosomes consist of a small (40S) and a large (60S) subunit. The 40S subunit contains about 32 different proteins and 1 molecule of RNA (18S). The 60S subunit contains 45 different proteins and 3 molecules of RNA (25S, 5.8S and 5S).

The protein localises to the cytoplasm. Its function is as follows. Component of the ribosome, a large ribonucleoprotein complex responsible for the synthesis of proteins in the cell. The small ribosomal subunit (SSU) binds messenger RNAs (mRNAs) and translates the encoded message by selecting cognate aminoacyl-transfer RNA (tRNA) molecules. The large subunit (LSU) contains the ribosomal catalytic site termed the peptidyl transferase center (PTC), which catalyzes the formation of peptide bonds, thereby polymerizing the amino acids delivered by tRNAs into a polypeptide chain. The nascent polypeptides leave the ribosome through a tunnel in the LSU and interact with protein factors that function in enzymatic processing, targeting, and the membrane insertion of nascent chains at the exit of the ribosomal tunnel. RPS14B is involved in nucleolar processing of pre-18S ribosomal RNA and ribosome assembly. The chain is Small ribosomal subunit protein uS11 (RPS14B) from Candida albicans (strain SC5314 / ATCC MYA-2876) (Yeast).